The primary structure comprises 512 residues: Probable DNA ligase (512 aa).

Glu-208 contacts ATP. The active-site N6-AMP-lysine intermediate is Lys-210. Arg-215, Arg-230, Glu-259, Phe-299, Arg-374, and Lys-380 together coordinate ATP.

This sequence belongs to the ATP-dependent DNA ligase family. Mg(2+) is required as a cofactor.

It carries out the reaction ATP + (deoxyribonucleotide)n-3'-hydroxyl + 5'-phospho-(deoxyribonucleotide)m = (deoxyribonucleotide)n+m + AMP + diphosphate.. Its function is as follows. DNA ligase that seals nicks in double-stranded DNA during DNA replication, DNA recombination and DNA repair. The chain is Probable DNA ligase from Streptomyces avermitilis (strain ATCC 31267 / DSM 46492 / JCM 5070 / NBRC 14893 / NCIMB 12804 / NRRL 8165 / MA-4680).